Reading from the N-terminus, the 251-residue chain is Protein PBMUCL2 (251 aa).

An N-terminal signal peptide occupies residues 1 to 22 (MPRYVPLLLLLLLLRCSERGGG). Disordered regions lie at residues 36-55 (WRDGVRVPGEGASWDSDRAS) and 65-251 (LSQS…THLL). Residues 72–87 (KHPETSPKDSRIREND) are compositionally biased toward basic and acidic residues. An N-linked (GlcNAc...) asparagine glycan is attached at Asn120. Positions 150–164 (TKDSVTADPGTTENF) are enriched in polar residues. Positions 153–251 (SVTADPGTTE…TTKHGDTHLL (99 aa)) are 15 X 11 AA approximate repeats. Basic and acidic residues predominate over residues 241-251 (ETTKHGDTHLL).

Detected in the brain, lung, spleen, thymus and prostate.

It localises to the secreted. This Homo sapiens (Human) protein is Protein PBMUCL2 (HCG22).